Consider the following 320-residue polypeptide: Malate dehydrogenase (320 aa).

NAD(+) contacts are provided by residues 10–15 and Asp-34; that span reads GAGQIG. Residues Arg-83 and Arg-89 each contribute to the substrate site. NAD(+) contacts are provided by residues Asn-96 and 119–121; that span reads ITN. Asn-121 and Arg-152 together coordinate substrate. The Proton acceptor role is filled by His-176.

This sequence belongs to the LDH/MDH superfamily. MDH type 3 family.

The catalysed reaction is (S)-malate + NAD(+) = oxaloacetate + NADH + H(+). Catalyzes the reversible oxidation of malate to oxaloacetate. This chain is Malate dehydrogenase, found in Methylorubrum populi (strain ATCC BAA-705 / NCIMB 13946 / BJ001) (Methylobacterium populi).